The following is a 63-amino-acid chain: Prokaryotic ubiquitin-like protein Pup (63 aa).

Positions 1–28 are disordered; that stretch reads MPQEFEQIRSADQPLDSEESAPVAGART. The interval 19–57 is ARC ATPase binding; that stretch reads ESAPVAGARTDDTVDALDAVLDDIESVLETNAEEYVGSF. Glutamate 63 participates in a covalent cross-link: Isoglutamyl lysine isopeptide (Glu-Lys) (interchain with K-? in acceptor proteins).

It belongs to the prokaryotic ubiquitin-like protein family. In terms of assembly, strongly interacts with the proteasome-associated ATPase ARC through a hydrophobic interface; the interacting region of Pup lies in its C-terminal half. There is one Pup binding site per ARC hexamer ring.

Its pathway is protein degradation; proteasomal Pup-dependent pathway. Protein modifier that is covalently attached to lysine residues of substrate proteins, thereby targeting them for proteasomal degradation. The tagging system is termed pupylation. This chain is Prokaryotic ubiquitin-like protein Pup, found in Bifidobacterium dentium (strain ATCC 27534 / DSM 20436 / JCM 1195 / Bd1).